The following is a 644-amino-acid chain: Threonine--tRNA ligase (644 aa).

The TGS domain occupies 1–61 (MPVITLPDGS…EKDTKLTIIT (61 aa)). Positions 242-535 (DHRRIGADLD…LIEHYEGKFP (294 aa)) are catalytic. Positions 335, 386, and 512 each coordinate Zn(2+).

The protein belongs to the class-II aminoacyl-tRNA synthetase family. In terms of assembly, homodimer. The cofactor is Zn(2+).

It is found in the cytoplasm. It catalyses the reaction tRNA(Thr) + L-threonine + ATP = L-threonyl-tRNA(Thr) + AMP + diphosphate + H(+). In terms of biological role, catalyzes the attachment of threonine to tRNA(Thr) in a two-step reaction: L-threonine is first activated by ATP to form Thr-AMP and then transferred to the acceptor end of tRNA(Thr). Also edits incorrectly charged L-seryl-tRNA(Thr). The chain is Threonine--tRNA ligase from Nitrosococcus oceani (strain ATCC 19707 / BCRC 17464 / JCM 30415 / NCIMB 11848 / C-107).